We begin with the raw amino-acid sequence, 90 residues long: uncharacterized protein (90 aa).

It belongs to the barstar family.

This is an uncharacterized protein from Escherichia coli O157:H7.